The chain runs to 211 residues: Small ribosomal subunit protein uS3 (211 aa).

One can recognise a KH type-2 domain in the interval 39–107 (VTKYVESSFA…VPSLNVVEVK (69 aa)).

It belongs to the universal ribosomal protein uS3 family. As to quaternary structure, part of the 30S ribosomal subunit. Forms a tight complex with proteins S10 and S14.

Binds the lower part of the 30S subunit head. Binds mRNA in the 70S ribosome, positioning it for translation. The polypeptide is Small ribosomal subunit protein uS3 (Neorickettsia sennetsu (strain ATCC VR-367 / Miyayama) (Ehrlichia sennetsu)).